Reading from the N-terminus, the 183-residue chain is U3 small nucleolar ribonucleoprotein protein IMP3 (183 aa).

The S4 RNA-binding domain maps to 109 to 175 (RRLPVIMHRL…IKKTLLRYRN (67 aa)).

This sequence belongs to the universal ribosomal protein uS4 family. As to quaternary structure, component of a heterotrimeric complex containing IMP3, IMP4 and MPP10. Interacts with MPP10. Component of the ribosomal small subunit (SSU) processome composed of at least 40 protein subunits and snoRNA U3.

The protein resides in the nucleus. The protein localises to the nucleolus. Its function is as follows. Required for the early cleavages at sites A0, A1 and A2 during 18S ribosomal pre-RNA processing. This is U3 small nucleolar ribonucleoprotein protein IMP3 (IMP3) from Saccharomyces cerevisiae (strain ATCC 204508 / S288c) (Baker's yeast).